Here is a 433-residue protein sequence, read N- to C-terminus: Enolase (433 aa).

Gln-164 is a binding site for (2R)-2-phosphoglycerate. The active-site Proton donor is the Glu-206. Mg(2+)-binding residues include Asp-243, Glu-289, and Asp-316. Lys-341, Arg-370, Ser-371, and Lys-392 together coordinate (2R)-2-phosphoglycerate. Lys-341 functions as the Proton acceptor in the catalytic mechanism.

Belongs to the enolase family. Mg(2+) is required as a cofactor.

The protein localises to the cytoplasm. The protein resides in the secreted. It localises to the cell surface. The catalysed reaction is (2R)-2-phosphoglycerate = phosphoenolpyruvate + H2O. It participates in carbohydrate degradation; glycolysis; pyruvate from D-glyceraldehyde 3-phosphate: step 4/5. In terms of biological role, catalyzes the reversible conversion of 2-phosphoglycerate (2-PG) into phosphoenolpyruvate (PEP). It is essential for the degradation of carbohydrates via glycolysis. In Borreliella afzelii (strain PKo) (Borrelia afzelii), this protein is Enolase.